The primary structure comprises 427 residues: Vitamin D3 receptor (427 aa).

Positions 21–96 form a DNA-binding region, nuclear receptor; the sequence is PRICGVCGDR…IGMMKEFILT (76 aa). The Zn(2+) site is built by cysteine 24, cysteine 27, cysteine 41, cysteine 44, cysteine 60, cysteine 66, cysteine 76, and cysteine 79. NR C4-type zinc fingers lie at residues 24–44 and 60–79; these read CGVC…CEGC and CPFN…CQAC. A hinge region spans residues 97 to 126; it reads DEEVQRKREMILKRKEEEALKDSLRPKLSE. The NR LBD domain occupies 127–423; it reads EQQRIIAILL…LTPLVLEVFG (297 aa). Tyrosine 143 serves as a coordination point for calcitriol. Residues 149–201 form a disordered region; that stretch reads DFGQFRPPVRGDEEEGTLPSRSSSAHAPSFSGSSSSSCSDQYTSSPDTMEPAS. The span at 168–193 shows a compositional bias: low complexity; it reads SRSSSAHAPSFSGSSSSSCSDQYTSS. Serine 237 contacts calcitriol. The interval 246–264 is interaction with coactivator LXXLL motif; the sequence is KMIPGFRDLTAEDQIVLLK. Arginine 274, serine 278, histidine 305, and histidine 397 together coordinate calcitriol. Positions 416–424 match the 9aaTAD motif; that stretch reads PLVLEVFGN.

The protein belongs to the nuclear hormone receptor family. NR1 subfamily. Homodimer in the absence of bound vitamin D3. Heterodimer with RXRA after vitamin D3 binding. Interacts with MED1, NCOA1, NCOA2, NCOA3 and NCOA6 coactivators, leading to a strong increase of transcription of target genes. Interacts with the corepressor NCOR1. Interacts with SNW1. Interacts with IRX4, the interaction does not affect its transactivation activity. Interacts with CRY1. Interacts with CRY2 in a ligand-dependent manner. Post-translationally, ubiquitinated by UBR5, leading to its degradation: UBR5 specifically recognizes and binds ligand-bound VDR when it is not associated with coactivators (NCOAs). In presence of NCOAs, the UBR5-degron is not accessible, preventing its ubiquitination and degradation.

It localises to the nucleus. It is found in the cytoplasm. Nuclear receptor for calcitriol, the active form of vitamin D3 which mediates the action of this vitamin on cells. Enters the nucleus upon vitamin D3 binding where it forms heterodimers with the retinoid X receptor/RXR. The VDR-RXR heterodimers bind to specific response elements on DNA and activate the transcription of vitamin D3-responsive target genes. Plays a central role in calcium homeostasis. Also functions as a receptor for the secondary bile acid lithocholic acid (LCA) and its metabolites. This chain is Vitamin D3 receptor (VDR), found in Sus scrofa (Pig).